Here is a 306-residue protein sequence, read N- to C-terminus: D-alanine--D-alanine ligase (306 aa).

The region spanning 102–300 (KHVAKAAGIP…FGEFLRWMVE (199 aa)) is the ATP-grasp domain. 128–183 (PMKPPYVVKPVREGSSFGVVIVKEDQSHPPQVITSSEWRYGDRVMVERYIAGRELT) contributes to the ATP binding site. The Mg(2+) site is built by aspartate 252, glutamate 267, and asparagine 269.

Belongs to the D-alanine--D-alanine ligase family. Mg(2+) is required as a cofactor. Mn(2+) serves as cofactor.

The protein resides in the cytoplasm. The enzyme catalyses 2 D-alanine + ATP = D-alanyl-D-alanine + ADP + phosphate + H(+). It participates in cell wall biogenesis; peptidoglycan biosynthesis. Cell wall formation. This chain is D-alanine--D-alanine ligase, found in Sinorhizobium fredii (strain NBRC 101917 / NGR234).